The primary structure comprises 150 residues: Transmembrane protein 35B (150 aa).

The N-terminal stretch at 1 to 21 (MSFRVGVLRVLLGVFFALTGA) is a signal peptide. 3 helical membrane passes run 62–82 (TAVGWLELLAGLLLVVGPPVL), 84–104 (EISNVLLILLMMGAVFTLVVL), and 111–131 (YVPAAVCLGLLLLLDSCHFLA).

Belongs to the DoxX family.

It localises to the membrane. The sequence is that of Transmembrane protein 35B from Mus musculus (Mouse).